We begin with the raw amino-acid sequence, 338 residues long: Anthranilate phosphoribosyltransferase (338 aa).

Residues Gly81, 84–85, Ser89, 91–94, 109–117, and Ala121 each bind 5-phospho-alpha-D-ribose 1-diphosphate; these read GD, NVST, and KHGNRALSS. Gly81 is a binding site for anthranilate. Residue Ser93 participates in Mg(2+) binding. Residue Asn112 participates in anthranilate binding. Residue Arg167 coordinates anthranilate. Residues Asp226 and Glu227 each contribute to the Mg(2+) site.

It belongs to the anthranilate phosphoribosyltransferase family. As to quaternary structure, homodimer. It depends on Mg(2+) as a cofactor.

It carries out the reaction N-(5-phospho-beta-D-ribosyl)anthranilate + diphosphate = 5-phospho-alpha-D-ribose 1-diphosphate + anthranilate. It functions in the pathway amino-acid biosynthesis; L-tryptophan biosynthesis; L-tryptophan from chorismate: step 2/5. Catalyzes the transfer of the phosphoribosyl group of 5-phosphorylribose-1-pyrophosphate (PRPP) to anthranilate to yield N-(5'-phosphoribosyl)-anthranilate (PRA). The protein is Anthranilate phosphoribosyltransferase of Rhodopseudomonas palustris (strain BisB5).